We begin with the raw amino-acid sequence, 286 residues long: Diaminopimelate epimerase (286 aa).

Substrate is bound by residues Asn12 and Asn67. Catalysis depends on Cys76, which acts as the Proton donor. Substrate is bound by residues 77 to 78 (GN), Asn165, Asn198, and 216 to 217 (ER). Catalysis depends on Cys225, which acts as the Proton acceptor. 226 to 227 (GT) contributes to the substrate binding site.

It belongs to the diaminopimelate epimerase family. Homodimer.

It is found in the cytoplasm. The catalysed reaction is (2S,6S)-2,6-diaminopimelate = meso-2,6-diaminopimelate. The protein operates within amino-acid biosynthesis; L-lysine biosynthesis via DAP pathway; DL-2,6-diaminopimelate from LL-2,6-diaminopimelate: step 1/1. In terms of biological role, catalyzes the stereoinversion of LL-2,6-diaminopimelate (L,L-DAP) to meso-diaminopimelate (meso-DAP), a precursor of L-lysine. This Methanothermobacter thermautotrophicus (strain ATCC 29096 / DSM 1053 / JCM 10044 / NBRC 100330 / Delta H) (Methanobacterium thermoautotrophicum) protein is Diaminopimelate epimerase.